Consider the following 744-residue polypeptide: Prestin (744 aa).

The Cytoplasmic portion of the chain corresponds to methionine 1 to lysine 75. Residues phenylalanine 76 to alanine 105 traverse the membrane as a helical segment. Over alanine 106 to proline 108 the chain is Extracellular. Residues proline 109 to leucine 126 form a helical membrane-spanning segment. Over glycine 127 to phenylalanine 137 the chain is Cytoplasmic. Residues alanine 138–leucine 151 traverse the membrane as a helical segment. Residues valine 152–threonine 168 are Extracellular-facing. The Involved in motor function signature appears at isoleucine 158–threonine 168. N-linked (GlcNAc...) asparagine glycans are attached at residues asparagine 163 and asparagine 166. Residues glutamate 169–cysteine 196 traverse the membrane as a helical segment. Topologically, residues arginine 197–threonine 206 are cytoplasmic. The chain crosses the membrane as a helical span at residues glutamate 207–phenylalanine 230. At glycine 231–phenylalanine 241 the chain is on the extracellular side. Residues serine 242–asparagine 253 constitute an intramembrane region (helical). Topologically, residues valine 254–asparagine 258 are extracellular. A helical transmembrane segment spans residues valine 259 to phenylalanine 282. The Cytoplasmic portion of the chain corresponds to lysine 283–proline 291. The helical transmembrane segment at leucine 292–phenylalanine 307 threads the bilayer. The Extracellular segment spans residues asparagine 308–aspartate 332. The chain crosses the membrane as a helical span at residues threonine 333 to tyrosine 367. At glutamine 368–aspartate 370 the chain is on the cytoplasmic side. The helical transmembrane segment at glycine 371–phenylalanine 388 threads the bilayer. Residues glutamine 389 to serine 396 are Extracellular-facing. Residues leucine 397–threonine 406 form a helical membrane-spanning segment. Serine 398 provides a ligand contact to salicylate. The Cytoplasmic segment spans residues glycine 407–threonine 410. A helical membrane pass occupies residues glutamine 411 to phenylalanine 432. The Extracellular portion of the chain corresponds to glutamate 433 to proline 436. Residues glutamine 437–threonine 464 traverse the membrane as a helical segment. Serine 465 is a topological domain (cytoplasmic). The helical transmembrane segment at lysine 466–phenylalanine 481 threads the bilayer. Over leucine 482–glycine 483 the chain is Extracellular. The helical transmembrane segment at leucine 484–glutamine 504 threads the bilayer. Positions serine 505–alanine 718 are extended region for STAS domain. Over serine 505–alanine 744 the chain is Cytoplasmic. Residues alanine 525 to serine 713 enclose the STAS domain. Positions alanine 718–alanine 744 are disordered.

Belongs to the SLC26A/SulP transporter (TC 2.A.53) family. As to quaternary structure, homodimer. Interacts (via STAS domain) with CALM; this interaction is calcium-dependent and the STAS domain interacts with only one lobe of CALM which is an elongated conformation. Interacts with MYH1.

It localises to the lateral cell membrane. The enzyme catalyses 2 hydrogencarbonate(in) + chloride(out) = 2 hydrogencarbonate(out) + chloride(in). In terms of biological role, voltage-sensitive motor protein that drives outer hair cell (OHC) electromotility (eM) and participates in sound amplification in the hearing organ. Converts changes in the transmembrane electric potential into mechanical displacements resulting in the coupling of its expansion to movement of a charged voltage sensor across the lipid membrane. The nature of the voltage sensor is not completely clear, and two models compete. In the first model, acts as an incomplete transporter where intracellular chloride anion acts as extrinsic voltage sensor that drives conformational change in the protein which is sufficient to produce a length change in the plane of the membrane and hence in the length of the OHC. The second model in which multiple charged amino acid residues are distributed at the intracellular and extracellular membrane interfaces that form an intrinsic voltage sensor, whose movement produces the non-linear capacitance (NLC). However, the effective voltage sensor may be the result of a hybrid voltage sensor, assembled from intrinsic charge (charged residues) and extrinsic charge (bound anion). Notably, binding of anions to the anion-binding pocket partially neutralizes the intrinsic positive charge rather than to form an electrically negative sensor, therefore remaining charge may serve as voltage sensor that, after depolarization, moves from down (expanded state) to up (contracted) conformation, which is accompanied by an eccentric contraction of the intermembrane cross-sectional area of the protein as well as a major increase in the hydrophobic thickness of the protein having as consequences the plasma membrane thickening and the cell contraction after membrane depolarization. The anion-binding pocket transits from the inward-open (Down) state, where it is exposed toward the intracellular solvent in the absence of anion, to the occluded (Up) state upon anion binding. Salicylate competes for the anion-binding site and inhibits the voltage-sensor movement, and therefore inhibits the charge transfer and electromotility by displacing Cl(-) from the anion-binding site and by preventing the structural transitions to the contracted state. In addition, can act as a weak Cl(-)/HCO3(-) antiporter across the cell membrane and so regulate the intracellular pH of the outer hair cells (OHCs), while firstly found as being unable to mediate electrogenic anion transport. Moreover, supports a role in cardiac mechanical amplification serving as an elastic element to enhance the actomyosin- based sarcomere contraction system. This is Prestin from Homo sapiens (Human).